A 275-amino-acid chain; its full sequence is Large ribosomal subunit protein uL2 (275 aa).

The tract at residues 227–261 is disordered; sequence PVDHPHGGGEAKSGQGNPHPVTPWGVPTKGYKTRK.

The protein belongs to the universal ribosomal protein uL2 family. In terms of assembly, part of the 50S ribosomal subunit. Forms a bridge to the 30S subunit in the 70S ribosome.

One of the primary rRNA binding proteins. Required for association of the 30S and 50S subunits to form the 70S ribosome, for tRNA binding and peptide bond formation. It has been suggested to have peptidyltransferase activity; this is somewhat controversial. Makes several contacts with the 16S rRNA in the 70S ribosome. In Xylella fastidiosa (strain M23), this protein is Large ribosomal subunit protein uL2.